The following is a 382-amino-acid chain: E3 ubiquitin-protein ligase RNF133 (382 aa).

Residues 65 to 167 enclose the PA domain; sequence SSILKRVAGV…IKGMEILHLI (103 aa). A helical transmembrane segment spans residues 190–210; sequence YFVSFMIVTTATLAYFTFYHI. The RING-type; atypical zinc-finger motif lies at 256-297; that stretch reads CVICFEAYKPNEIVRILTCKHFFHKNCIDPWILAHGTCPMCK. The interval 328-382 is disordered; the sequence is TLSPVEEETNYELPPARTSSKVTHVQEHPTSSANAGSQPPEAEETSHPSHGQQVL. Over residues 344–364 the composition is skewed to polar residues; sequence RTSSKVTHVQEHPTSSANAGS.

In terms of assembly, interacts with E3 ligase UBE2J1. In terms of processing, auto-ubiquitinated. In terms of tissue distribution, expression is testis-specific.

The protein localises to the endoplasmic reticulum membrane. The enzyme catalyses S-ubiquitinyl-[E2 ubiquitin-conjugating enzyme]-L-cysteine + [acceptor protein]-L-lysine = [E2 ubiquitin-conjugating enzyme]-L-cysteine + N(6)-ubiquitinyl-[acceptor protein]-L-lysine.. Its pathway is protein modification; protein ubiquitination. Functionally, has E3 ubiquitin-protein ligase activity. Plays a role in male fecundity through the interaction with the E2 ubituitin-protein ligase UBE2J1. This is E3 ubiquitin-protein ligase RNF133 (Rnf133) from Mus musculus (Mouse).